The primary structure comprises 341 residues: tRNA N6-adenosine threonylcarbamoyltransferase (341 aa).

Fe cation is bound by residues His111 and His115. Substrate-binding positions include 134–138 (LVSGG), Asp167, Gly180, and Asn274. Position 302 (Asp302) interacts with Fe cation.

The protein belongs to the KAE1 / TsaD family. Fe(2+) serves as cofactor.

It is found in the cytoplasm. The catalysed reaction is L-threonylcarbamoyladenylate + adenosine(37) in tRNA = N(6)-L-threonylcarbamoyladenosine(37) in tRNA + AMP + H(+). Functionally, required for the formation of a threonylcarbamoyl group on adenosine at position 37 (t(6)A37) in tRNAs that read codons beginning with adenine. Is involved in the transfer of the threonylcarbamoyl moiety of threonylcarbamoyl-AMP (TC-AMP) to the N6 group of A37, together with TsaE and TsaB. TsaD likely plays a direct catalytic role in this reaction. The sequence is that of tRNA N6-adenosine threonylcarbamoyltransferase from Paraburkholderia phymatum (strain DSM 17167 / CIP 108236 / LMG 21445 / STM815) (Burkholderia phymatum).